Consider the following 122-residue polypeptide: Large ribosomal subunit protein uL14 (122 aa).

The protein belongs to the universal ribosomal protein uL14 family. As to quaternary structure, part of the 50S ribosomal subunit. Forms a cluster with proteins L3 and L19. In the 70S ribosome, L14 and L19 interact and together make contacts with the 16S rRNA in bridges B5 and B8.

Its function is as follows. Binds to 23S rRNA. Forms part of two intersubunit bridges in the 70S ribosome. The protein is Large ribosomal subunit protein uL14 of Mycobacterium ulcerans (strain Agy99).